The sequence spans 489 residues: Equilibrative nucleobase transporter 1 (489 aa).

Residues 17–37 (LLECLGFAGVLFGWTSLVFVF) traverse the membrane as a helical segment. Asn56 carries an N-linked (GlcNAc...) asparagine glycan. The next 4 helical transmembrane spans lie at 72 to 92 (LIFT…GYIF), 102 to 122 (LIAI…SADS), 123 to 143 (AVLL…FLIT), and 158 to 180 (IITM…KLLY). Ser253 bears the Phosphoserine mark. At Thr258 the chain carries Phosphothreonine. 6 helical membrane passes run 277 to 297 (FAWH…FIGT), 318 to 338 (NAFA…GLLM), 358 to 380 (AAAL…GFAV), 402 to 422 (SFLY…EHFG), 426 to 446 (GLVM…FTLI), and 455 to 475 (LYVN…PFLV).

It belongs to the SLC43A transporter (TC 2.A.1.44) family.

The protein localises to the basolateral cell membrane. It catalyses the reaction adenine(out) = adenine(in). The enzyme catalyses guanine(out) = guanine(in). The catalysed reaction is hypoxanthine(out) = hypoxanthine(in). Functionally, sodium-independent purine-selective nucleobase transporter which mediates the equilibrative transport of extracellular purine nucleobases such as adenine, guanine and hypoxanthine. May regulate fatty acid (FA) transport in adipocytes, acting as a positive regulator of FA efflux and as a negative regulator of FA uptake. The protein is Equilibrative nucleobase transporter 1 (SLC43A3) of Bos taurus (Bovine).